The following is a 234-amino-acid chain: N-acetyl-alpha-D-glucosaminyl L-malate deacetylase 1 (234 aa).

The Zn(2+) site is built by His12, Asp15, and His113.

Belongs to the PIGL family. As to quaternary structure, homohexamer. Trimer of dimers. Requires Zn(2+) as cofactor.

The enzyme catalyses (S)-malyl N-acetyl-alpha-D-glucosaminide + H2O = (S)-malyl alpha-D-glucosaminide + acetate. Its function is as follows. Involved in bacillithiol (BSH) biosynthesis. Catalyzes the second step of the pathway, the deacetylation of N-acetylglucosaminylmalate (GlcNAc-Mal) to glucosamine malate (GlcN-Mal). In Bacillus cereus (strain ATCC 14579 / DSM 31 / CCUG 7414 / JCM 2152 / NBRC 15305 / NCIMB 9373 / NCTC 2599 / NRRL B-3711), this protein is N-acetyl-alpha-D-glucosaminyl L-malate deacetylase 1.